We begin with the raw amino-acid sequence, 295 residues long: Ethanolamine ammonia-lyase small subunit (295 aa).

Adenosylcob(III)alamin contacts are provided by valine 207, glutamate 228, and cysteine 258.

Belongs to the EutC family. In terms of assembly, the basic unit is a heterodimer which dimerizes to form tetramers. The heterotetramers trimerize; 6 large subunits form a core ring with 6 small subunits projecting outwards. Requires adenosylcob(III)alamin as cofactor.

The protein resides in the bacterial microcompartment. It catalyses the reaction ethanolamine = acetaldehyde + NH4(+). It participates in amine and polyamine degradation; ethanolamine degradation. In terms of biological role, catalyzes the deamination of various vicinal amino-alcohols to oxo compounds. Allows this organism to utilize ethanolamine as the sole source of nitrogen and carbon in the presence of external vitamin B12. This chain is Ethanolamine ammonia-lyase small subunit, found in Escherichia coli (strain SMS-3-5 / SECEC).